A 523-amino-acid chain; its full sequence is Flavonoid 3',5'-hydroxylase (523 aa).

C460 lines the heme pocket.

The protein belongs to the cytochrome P450 family. Requires heme as cofactor.

It carries out the reaction a 3',5'-unsubstituted flavanone + 2 reduced [NADPH--hemoprotein reductase] + 2 O2 = a 3',5'-dihydroxyflavanone + 2 oxidized [NADPH--hemoprotein reductase] + 2 H2O + 2 H(+). Its pathway is pigment biosynthesis; anthocyanin biosynthesis. Its function is as follows. Catalyzes the 3'5'-hydroxylation of naringenin and eriodictyol to form 5,7,3,'4',5'-pentahydroxyflavanone and 3',5'-hydroxylation of dihydrokaempferol and dihydroquercetin to form dihydromyricetin. This is Flavonoid 3',5'-hydroxylase (CYP75A6) from Campanula medium (Canterbury bells).